Reading from the N-terminus, the 42-residue chain is GITPDCTFNEKDIELHVYSRDKRNGIILKKEILKNYDLFKES.

The protein belongs to the AB hydrolase superfamily. Lipase family. Post-translationally, contains six disulfide bonds. As to expression, expressed by the venom gland.

Its subcellular location is the secreted. It catalyses the reaction a 1,2-diacyl-sn-glycero-3-phosphocholine + H2O = a 2-acyl-sn-glycero-3-phosphocholine + a fatty acid + H(+). In terms of biological role, catalyzes the hydrolysis of phosphatidylcholine with phospholipase A1 activity. May act as an allergen and induce hemolytic activity. The polypeptide is Phospholipase A1 (Polistes gallicus (Paper wasp)).